The following is a 114-amino-acid chain: Hydrogenase maturation factor HypA (114 aa).

His-2 serves as a coordination point for Ni(2+). Zn(2+)-binding residues include Cys-70, Cys-73, Cys-86, and Cys-89.

It belongs to the HypA/HybF family.

Functionally, involved in the maturation of [NiFe] hydrogenases. Required for nickel insertion into the metal center of the hydrogenase. This chain is Hydrogenase maturation factor HypA, found in Trichodesmium erythraeum (strain IMS101).